A 117-amino-acid polypeptide reads, in one-letter code: DNA-directed RNA polymerase II subunit RPB11 (117 aa).

An N-acetylmethionine modification is found at M1.

The protein belongs to the archaeal Rpo11/eukaryotic RPB11/RPC19 RNA polymerase subunit family. Component of the RNA polymerase II (Pol II) core complex consisting of 12 subunits: a ten-subunit catalytic core composed of POLR2A/RPB1, POLR2B/RPB2, POLR2C/RPB3, POLR2I/RPB9, POLR2J/RPB11, POLR2E/RPABC1, POLR2F/RPABC2, POLR2H/RPABC3, POLR2K/RPABC4 and POLR2L/RPABC5 and a mobile stalk composed of two subunits POLR2D/RPB4 and POLR2G/RPB7, protruding from the core and functioning primarily in transcription initiation. Part of Pol II(G) complex, in which Pol II core associates with an additional subunit POLR2M; unlike conventional Pol II, Pol II(G) functions as a transcriptional repressor. Part of TBP-based Pol II pre-initiation complex (PIC), in which Pol II core assembles with general transcription factors and other specific initiation factors including GTF2E1, GTF2E2, GTF2F1, GTF2F2, TCEA1, ERCC2, ERCC3, GTF2H2, GTF2H3, GTF2H4, GTF2H5, GTF2A1, GTF2A2, GTF2B and TBP; this large multi-subunit PIC complex mediates DNA unwinding and targets Pol II core to the transcription start site where the first phosphodiester bond forms. Interacts with AATF. Interacts with PTPN6; this interaction promotes the recruitment of RNA pol II to the PCK1 promoter.

The protein localises to the nucleus. Its function is as follows. Core component of RNA polymerase II (Pol II), a DNA-dependent RNA polymerase which synthesizes mRNA precursors and many functional non-coding RNAs using the four ribonucleoside triphosphates as substrates. This is DNA-directed RNA polymerase II subunit RPB11 (Polr2j) from Mus musculus (Mouse).